A 439-amino-acid chain; its full sequence is D-inositol 3-phosphate glycosyltransferase (439 aa).

His-21 serves as a coordination point for 1D-myo-inositol 3-phosphate. Residues 27 to 28 and Gly-35 contribute to the UDP-N-acetyl-alpha-D-glucosamine site; that span reads QP. Residues 32–37, Lys-90, Tyr-123, Thr-147, and Arg-167 each bind 1D-myo-inositol 3-phosphate; that span reads DAGGMN. UDP-N-acetyl-alpha-D-glucosamine is bound by residues Arg-241, Lys-246, and Gln-299. Mg(2+) contacts are provided by Tyr-308, Arg-309, and Ala-311. The UDP-N-acetyl-alpha-D-glucosamine site is built by Glu-321 and Glu-329. Thr-335 provides a ligand contact to Mg(2+).

It belongs to the glycosyltransferase group 1 family. MshA subfamily. In terms of assembly, homodimer.

It catalyses the reaction 1D-myo-inositol 3-phosphate + UDP-N-acetyl-alpha-D-glucosamine = 1D-myo-inositol 2-acetamido-2-deoxy-alpha-D-glucopyranoside 3-phosphate + UDP + H(+). Functionally, catalyzes the transfer of a N-acetyl-glucosamine moiety to 1D-myo-inositol 3-phosphate to produce 1D-myo-inositol 2-acetamido-2-deoxy-glucopyranoside 3-phosphate in the mycothiol biosynthesis pathway. The protein is D-inositol 3-phosphate glycosyltransferase of Mycobacterium sp. (strain JLS).